We begin with the raw amino-acid sequence, 132 residues long: MVMTDPIADFLTRIRNANQVKHEVLEVPASNIKKGIAEILKREGFVKNVEVIEDDKQGIIRVFLKYGKNGERVITNLKRISKPGLRVYAKRDDMPKVLNGLGIAIISTSEGLLTDKEARQKNVGGEVIAYVW.

The protein belongs to the universal ribosomal protein uS8 family. As to quaternary structure, part of the 30S ribosomal subunit. Contacts proteins S5 and S12.

One of the primary rRNA binding proteins, it binds directly to 16S rRNA central domain where it helps coordinate assembly of the platform of the 30S subunit. The protein is Small ribosomal subunit protein uS8 of Streptococcus pyogenes serotype M1.